We begin with the raw amino-acid sequence, 284 residues long: Bifunctional protein FolD (284 aa).

NADP(+) is bound by residues 164 to 166 and serine 189; that span reads GRS.

It belongs to the tetrahydrofolate dehydrogenase/cyclohydrolase family. In terms of assembly, homodimer.

It carries out the reaction (6R)-5,10-methylene-5,6,7,8-tetrahydrofolate + NADP(+) = (6R)-5,10-methenyltetrahydrofolate + NADPH. The enzyme catalyses (6R)-5,10-methenyltetrahydrofolate + H2O = (6R)-10-formyltetrahydrofolate + H(+). It participates in one-carbon metabolism; tetrahydrofolate interconversion. Its function is as follows. Catalyzes the oxidation of 5,10-methylenetetrahydrofolate to 5,10-methenyltetrahydrofolate and then the hydrolysis of 5,10-methenyltetrahydrofolate to 10-formyltetrahydrofolate. The polypeptide is Bifunctional protein FolD (Listeria monocytogenes serotype 4a (strain HCC23)).